The chain runs to 144 residues: MLLNTLSPAAGSKHAPKRLGRGVGSGLGKTGGRGHKGQKSRSGGKVRPGFEGGQMPLKQRLPKFGFTSRKSFVSAEVRLSELAKVTGDVVDLNALKAANLVTKNIEFAKIVLSGEINKAVTVKGLRVTKGAKAAIEAAGGKIEE.

The segment at 1-57 (MLLNTLSPAAGSKHAPKRLGRGVGSGLGKTGGRGHKGQKSRSGGKVRPGFEGGQMPL) is disordered. Over residues 21–31 (RGVGSGLGKTG) the composition is skewed to gly residues. The span at 32 to 44 (GRGHKGQKSRSGG) shows a compositional bias: basic residues.

It belongs to the universal ribosomal protein uL15 family. In terms of assembly, part of the 50S ribosomal subunit.

In terms of biological role, binds to the 23S rRNA. This Vibrio cholerae serotype O1 (strain ATCC 39315 / El Tor Inaba N16961) protein is Large ribosomal subunit protein uL15.